Reading from the N-terminus, the 260-residue chain is NAD kinase (260 aa).

The active-site Proton acceptor is the aspartate 49. NAD(+) contacts are provided by residues 49–50, 119–120, aspartate 149, alanine 157, and 160–165; these read DG, NE, and TAYNLS.

It belongs to the NAD kinase family. A divalent metal cation is required as a cofactor.

The protein localises to the cytoplasm. The enzyme catalyses NAD(+) + ATP = ADP + NADP(+) + H(+). In terms of biological role, involved in the regulation of the intracellular balance of NAD and NADP, and is a key enzyme in the biosynthesis of NADP. Catalyzes specifically the phosphorylation on 2'-hydroxyl of the adenosine moiety of NAD to yield NADP. The polypeptide is NAD kinase (Caulobacter vibrioides (strain ATCC 19089 / CIP 103742 / CB 15) (Caulobacter crescentus)).